A 240-amino-acid chain; its full sequence is Uridylate kinase (240 aa).

13 to 16 is an ATP binding site; it reads KISG. Gly-55 lines the UMP pocket. The ATP site is built by Gly-56 and Arg-60. UMP is bound by residues Asp-75 and 136–143; that span reads TGNPFFTT. Residues Thr-163, Gln-164, Tyr-169, and Asp-172 each contribute to the ATP site.

It belongs to the UMP kinase family. Homohexamer.

Its subcellular location is the cytoplasm. It catalyses the reaction UMP + ATP = UDP + ADP. Its pathway is pyrimidine metabolism; CTP biosynthesis via de novo pathway; UDP from UMP (UMPK route): step 1/1. Its activity is regulated as follows. Inhibited by UTP. Its function is as follows. Catalyzes the reversible phosphorylation of UMP to UDP. The polypeptide is Uridylate kinase (Paramagnetospirillum magneticum (strain ATCC 700264 / AMB-1) (Magnetospirillum magneticum)).